Reading from the N-terminus, the 198-residue chain is RxLR effector protein CRE4 (198 aa).

An N-terminal signal peptide occupies residues 1–20 (MLRSFLLIVATVSLFGQCKP). The RxLR-dEER signature appears at 43-52 (RFVRTNDEER).

The protein belongs to the RxLR effector family.

The protein localises to the secreted. Its subcellular location is the host cytoplasm. It is found in the host nucleus. It localises to the host nucleolus. Its function is as follows. Effector that is involved in host plant infection. Contributes to virulence during the early infection stage, by inhibiting plant defense responses induced by both PAMP-triggered immunity (PTI) and effector-triggered immunity (ETI). The polypeptide is RxLR effector protein CRE4 (CRE4) (Phytophthora infestans (strain T30-4) (Potato late blight agent)).